The primary structure comprises 304 residues: tRNA dimethylallyltransferase (304 aa).

Residue 10–17 (GPTASGKT) coordinates ATP. 12–17 (TASGKT) lines the substrate pocket. Interaction with substrate tRNA regions lie at residues 35–38 (DSAL), 159–163 (QRLSR), and 240–245 (RCVGYR).

Belongs to the IPP transferase family. Monomer. It depends on Mg(2+) as a cofactor.

It catalyses the reaction adenosine(37) in tRNA + dimethylallyl diphosphate = N(6)-dimethylallyladenosine(37) in tRNA + diphosphate. Functionally, catalyzes the transfer of a dimethylallyl group onto the adenine at position 37 in tRNAs that read codons beginning with uridine, leading to the formation of N6-(dimethylallyl)adenosine (i(6)A). This Shewanella sp. (strain W3-18-1) protein is tRNA dimethylallyltransferase.